We begin with the raw amino-acid sequence, 138 residues long: Small ribosomal subunit protein uS12 (138 aa).

A 3-methylthioaspartic acid modification is found at aspartate 89. Positions 107-138 (VSGRMQRRSKYGAKFPKTGTGKTKAVPTKNKK) are disordered.

The protein belongs to the universal ribosomal protein uS12 family. As to quaternary structure, part of the 30S ribosomal subunit. Contacts proteins S8 and S17. May interact with IF1 in the 30S initiation complex.

In terms of biological role, with S4 and S5 plays an important role in translational accuracy. Interacts with and stabilizes bases of the 16S rRNA that are involved in tRNA selection in the A site and with the mRNA backbone. Located at the interface of the 30S and 50S subunits, it traverses the body of the 30S subunit contacting proteins on the other side and probably holding the rRNA structure together. The combined cluster of proteins S8, S12 and S17 appears to hold together the shoulder and platform of the 30S subunit. In Azobacteroides pseudotrichonymphae genomovar. CFP2, this protein is Small ribosomal subunit protein uS12.